Reading from the N-terminus, the 1840-residue chain is Collagen alpha-1(V) chain (1840 aa).

The N-terminal stretch at 1–30 (MDVHTRWKAPRPGAPLLSSPLLLLLLLLWA) is a signal peptide. The Laminin G-like domain occupies 72 to 244 (DVAYRVSKDA…DYCEHYSPDC (173 aa)). Residues 231–445 (RAAYDYCEHY…MPANQDTIYE (215 aa)) are nonhelical region. Sulfotyrosine occurs at positions 234, 236, 240, 262, 263, 336, 338, and 344. Disordered regions lie at residues 241–547 (SPDC…QESQ) and 561–1576 (GPAG…EVIQ). A compositionally biased stretch (acidic residues) spans 258 to 268 (NPDEYYPEGEG). 3 stretches are compositionally biased toward low complexity: residues 335 to 352 (DYDY…PYED), 375 to 387 (PTST…SSNP), and 462 to 471 (IIEPGMLIEG). The interval 446-560 (GIGGPRGEKG…ILQQARLALR (115 aa)) is interrupted collagenous region. Over residues 472–487 (PPGPEGPAGLPGPPGT) the composition is skewed to pro residues. Low complexity-rich tracts occupy residues 508-525 (LPGA…LMLP) and 561-572 (GPAGPMGLTGRP). A triple-helical region region spans residues 561–1572 (GPAGPMGLTG…GLPGPPGPPG (1012 aa)). 3 positions are modified to 4-hydroxyproline: Pro-572, Pro-578, and Pro-623. Lys-629 is subject to 5-hydroxylysine. Pro-641 is subject to 4-hydroxyproline. Lys-644 bears the 5-hydroxylysine mark. 5 positions are modified to 4-hydroxyproline: Pro-650, Pro-656, Pro-659, Pro-677, and Pro-680. Low complexity predominate over residues 673–688 (PRGLPGEPGPRGLLGP). Pro-682 and Pro-688 each carry 3-hydroxyproline. Over residues 689-698 (KGPPGPPGPP) the composition is skewed to pro residues. 3 positions are modified to 4-hydroxyproline: Pro-692, Pro-698, and Pro-707. The residue at position 710 (Lys-710) is a 5-hydroxylysine. 4 positions are modified to 4-hydroxyproline: Pro-719, Pro-722, Pro-728, and Pro-734. The span at 724–743 (QQGNPGAQGLPGPQGAIGPP) shows a compositional bias: low complexity. At Lys-746 the chain carries 5-hydroxylysine. The span at 749-758 (LGKPGLPGMP) shows a compositional bias: low complexity. Pro-752, Pro-758, Pro-764, Pro-767, and Pro-773 each carry 4-hydroxyproline. At Lys-776 the chain carries 5-hydroxylysine. 2 positions are modified to 4-hydroxyproline: Pro-782 and Pro-791. Lys-797, Lys-806, Lys-809, and Lys-812 each carry 5-hydroxylysine. The residue at position 818 (Pro-818) is a 4-hydroxyproline. Lys-821 carries the 5-hydroxylysine modification. Pro-836 carries the 4-hydroxyproline modification. The span at 839–848 (RGEDGPEGPK) shows a compositional bias: basic and acidic residues. Residues Lys-848 and Lys-866 each carry the 5-hydroxylysine modification. 4-hydroxyproline occurs at positions 872, 875, and 878. At Lys-884 the chain carries 5-hydroxylysine. 4-hydroxyproline occurs at positions 890 and 893. The residue at position 899 (Lys-899) is a 5-hydroxylysine. 2 positions are modified to 4-hydroxyproline: Pro-905 and Pro-908. Residues 910-919 (PRGQRGPTGP) show a composition bias toward low complexity. 4-hydroxyproline occurs at positions 932 and 947. Low complexity-rich tracts occupy residues 973-992 (KDGL…QGKT) and 1001-1013 (VGPQ…TGPM). 4-hydroxyproline occurs at positions 1019, 1022, 1025, and 1031. Positions 1090 to 1106 (SPGERGPAGAAGPIGIP) are enriched in low complexity. The span at 1108–1117 (RPGPQGPPGP) shows a compositional bias: pro residues. 2 positions are modified to 4-hydroxyproline: Pro-1223 and Pro-1226. The span at 1261–1270 (PSGAPGADGP) shows a compositional bias: low complexity. Gly residues predominate over residues 1296–1305 (GLPGEGGPLG). Composition is skewed to pro residues over residues 1382–1400 (TGEP…PGPA) and 1456–1471 (SPGP…PPGL). Pro-1469 and Pro-1472 each carry 4-hydroxyproline. A compositionally biased stretch (low complexity) spans 1487–1496 (PGLIGLIGPP). Residues 1528 to 1543 (PLGPPGPPGLPGPPGP) show a composition bias toward pro residues. Positions 1544 to 1556 (KGAKGSSGPTGPK) are enriched in low complexity. The tract at residues 1573 to 1607 (EVIQPLPIQASRTRRNIDASQLLDDGAGESYVDYA) is nonhelical region. Sulfotyrosine occurs at positions 1603 and 1606. The region spanning 1611 to 1839 (EEIFGSLNSL…GFEVGPACFL (229 aa)) is the Fibrillar collagen NC1 domain.

Belongs to the fibrillar collagen family. In terms of assembly, trimers of two alpha 1(V) and one alpha 2(V) chains in most tissues and trimers of one alpha 1(V), one alpha 2(V), and one alpha 3(V) chains in placenta. Interacts with CSPG4. In terms of processing, prolines at the third position of the tripeptide repeating unit (G-X-Y) are hydroxylated in some or all of the chains. Sulfated on 40% of tyrosines. Post-translationally, hydroxylation on proline residues within the sequence motif, GXPG, is most likely to be 4-hydroxy as this fits the requirement for 4-hydroxylation in vertebrates. A high molecular weight form was detected in Schwann cells and peripheral nerve. A lower, probably processed form, is detected in all other tissues tested (at protein level).

Its subcellular location is the secreted. It is found in the extracellular space. The protein localises to the extracellular matrix. In terms of biological role, type V collagen is a member of group I collagen (fibrillar forming collagen). It is a minor connective tissue component of nearly ubiquitous distribution. Type V collagen binds to DNA, heparan sulfate, thrombospondin, heparin, and insulin. In Rattus norvegicus (Rat), this protein is Collagen alpha-1(V) chain (Col5a1).